The chain runs to 112 residues: Reprimo-like protein (112 aa).

Residues 59–79 traverse the membrane as a helical segment; sequence VVQIAVLCVLSLTVLFGIFFL.

Belongs to the reprimo family.

It localises to the membrane. In Xenopus laevis (African clawed frog), this protein is Reprimo-like protein (rprml).